The following is a 271-amino-acid chain: NADPH-dependent 7-cyano-7-deazaguanine reductase (271 aa).

Substrate is bound at residue 81-83 (IES). 83–84 (SK) serves as a coordination point for NADPH. Cysteine 177 functions as the Thioimide intermediate in the catalytic mechanism. Aspartate 184 (proton donor) is an active-site residue. 216 to 217 (HE) is a binding site for substrate. 245–246 (RG) lines the NADPH pocket.

This sequence belongs to the GTP cyclohydrolase I family. QueF type 2 subfamily. As to quaternary structure, homodimer.

The protein resides in the cytoplasm. The catalysed reaction is 7-aminomethyl-7-carbaguanine + 2 NADP(+) = 7-cyano-7-deazaguanine + 2 NADPH + 3 H(+). It functions in the pathway tRNA modification; tRNA-queuosine biosynthesis. Catalyzes the NADPH-dependent reduction of 7-cyano-7-deazaguanine (preQ0) to 7-aminomethyl-7-deazaguanine (preQ1). The chain is NADPH-dependent 7-cyano-7-deazaguanine reductase from Xanthomonas campestris pv. campestris (strain 8004).